The following is a 1007-amino-acid chain: Integrator complex subunit 8 (1007 aa).

Positions 19–24 (WFEFLL) match the WFEF motif motif. Residues 56–78 (TAQESVGTPGSDLQNLNQTPSNS) show a composition bias toward polar residues. The tract at residues 56–112 (TAQESVGTPGSDLQNLNQTPSNSGPIPGVVGGAPAPTTPTASGGVGMPHSPQRPAEK) is disordered. Residues 79–97 (GPIPGVVGGAPAPTTPTAS) show a composition bias toward low complexity.

It belongs to the Integrator subunit 8 family. In terms of assembly, belongs to the multiprotein complex Integrator, at least composed of IntS1, IntS2, IntS3, IntS4, omd/IntS5, IntS6, defl/IntS7, IntS8, IntS9, IntS10, IntS11, IntS12, asun/IntS13, IntS14 and IntS15. The core complex associates with protein phosphatase 2A subunits mts/PP2A and Pp2A-29B, to form the Integrator-PP2A (INTAC) complex.

The protein resides in the nucleus. The protein localises to the chromosome. Functionally, component of the integrator complex, a multiprotein complex that terminates RNA polymerase II (Pol II) transcription in the promoter-proximal region of genes. The integrator complex provides a quality checkpoint during transcription elongation by driving premature transcription termination of transcripts that are unfavorably configured for transcriptional elongation: the complex terminates transcription by (1) catalyzing dephosphorylation of the C-terminal domain (CTD) of Pol II subunit Polr2A/Rbp1 and Spt5, and (2) degrading the exiting nascent RNA transcript via endonuclease activity. The integrator complex is also involved in the 3'-end processing of the U7 snRNA, and also the spliceosomal snRNAs U1, U2, U4 and U5. Within the integrator complex, INTS8 is required for the recruitment of protein phosphatase 2A (PP2A) to transcription pause-release checkpoint. The sequence is that of Integrator complex subunit 8 from Drosophila melanogaster (Fruit fly).